We begin with the raw amino-acid sequence, 521 residues long: MSVLSWAFTVAWFTLWMLMLYLTNEMKLKFTDAAAIVNVFAGVSAIGHLGMQFLVDAFIGHFWMLCLSTLAFSFGFGFLAISASPILSGNGQKGLFYVALTVISVGIFGRSISLGVFTEDQLEDGRNKGNPAKLVSFVIGNVGNFVFLLLAAIAMPQISPWFVRFTIPSGCEVLAMLIFISGACSYKRVKPGGSPLTTVFRVFMASASKMSCAYSNNSSQLYEKAECDQDIKPHTSSLRYLDRAAMILQTESLEQQRKNRWKLCRVTEVEQTKSVIRTVPLFATSLISGIVFSLGNTFFLEQANHMDSKFGSWNLPLPLLLLFSEAARLGSRELCVMAAKRHAIDFPESPKQTKTPYGIPVSIILSIFCCSIAAHVESRRLKVVSTQGLLHETVPMSVFWLLPQYILLGSITGIYENSFALYLEETVPEELSQYMVLLNVGVCGVGIMSNIALVSLVGSVSGGKWFQDTINKSRVDNYYWVITVFCMFNLLLYFIVTYRYTVCNKKDGATQENDRRIIASV.

A run of 12 helical transmembrane segments spans residues 3 to 23 (VLSWAFTVAWFTLWMLMLYLT), 35 to 55 (AIVNVFAGVSAIGHLGMQFLV), 62 to 82 (FWMLCLSTLAFSFGFGFLAIS), 96 to 116 (FYVALTVISVGIFGRSISLGV), 134 to 154 (LVSFVIGNVGNFVFLLLAAIA), 165 to 185 (FTIPSGCEVLAMLIFISGACS), 279 to 299 (VPLFATSLISGIVFSLGNTFF), 310 to 327 (FGSWNLPLPLLLLFSEAA), 356 to 376 (PYGIPVSIILSIFCCSIAAHV), 394 to 414 (VPMSVFWLLPQYILLGSITGI), 440 to 460 (VGVCGVGIMSNIALVSLVGSV), and 478 to 498 (YYWVITVFCMFNLLLYFIVTY).

It belongs to the major facilitator superfamily. Proton-dependent oligopeptide transporter (POT/PTR) (TC 2.A.17) family. As to expression, expressed in roots.

Its subcellular location is the membrane. The sequence is that of Protein NRT1/ PTR FAMILY 5.5 (NPF5.5) from Arabidopsis thaliana (Mouse-ear cress).